The chain runs to 318 residues: 26 kDa endochitinase 1 (318 aa).

The first 19 residues, 1–19 (MRAFVLFAVVAMAATMAVA), serve as a signal peptide directing secretion. The region spanning 20–59 (EQCGSQAGGATCPNCLCCSRFGWCGSTPYCGDGCQSQCSG) is the Chitin-binding type-1 domain. Disulfide bonds link Cys22/Cys37, Cys31/Cys43, Cys36/Cys49, Cys53/Cys57, Cys98/Cys160, Cys172/Cys180, and Cys279/Cys311. Glu142 serves as the catalytic Proton donor.

The protein belongs to the glycosyl hydrolase 19 family. Chitinase class I subfamily.

It carries out the reaction Random endo-hydrolysis of N-acetyl-beta-D-glucosaminide (1-&gt;4)-beta-linkages in chitin and chitodextrins.. Defense against chitin-containing fungal pathogens. This is 26 kDa endochitinase 1 from Hordeum vulgare (Barley).